We begin with the raw amino-acid sequence, 393 residues long: Dual-specificity RNA methyltransferase RlmN (393 aa).

Residue glutamate 115 is the Proton acceptor of the active site. A Radical SAM core domain is found at 121–365 (EEDRGTLCIS…APIRKTRGDD (245 aa)). A disulfide bridge connects residues cysteine 128 and cysteine 370. Positions 135, 139, and 142 each coordinate [4Fe-4S] cluster. S-adenosyl-L-methionine-binding positions include 194–195 (GE), serine 226, 248–250 (SFH), and asparagine 327. The S-methylcysteine intermediate role is filled by cysteine 370.

It belongs to the radical SAM superfamily. RlmN family. It depends on [4Fe-4S] cluster as a cofactor.

The protein localises to the cytoplasm. The catalysed reaction is adenosine(2503) in 23S rRNA + 2 reduced [2Fe-2S]-[ferredoxin] + 2 S-adenosyl-L-methionine = 2-methyladenosine(2503) in 23S rRNA + 5'-deoxyadenosine + L-methionine + 2 oxidized [2Fe-2S]-[ferredoxin] + S-adenosyl-L-homocysteine. It catalyses the reaction adenosine(37) in tRNA + 2 reduced [2Fe-2S]-[ferredoxin] + 2 S-adenosyl-L-methionine = 2-methyladenosine(37) in tRNA + 5'-deoxyadenosine + L-methionine + 2 oxidized [2Fe-2S]-[ferredoxin] + S-adenosyl-L-homocysteine. In terms of biological role, specifically methylates position 2 of adenine 2503 in 23S rRNA and position 2 of adenine 37 in tRNAs. m2A2503 modification seems to play a crucial role in the proofreading step occurring at the peptidyl transferase center and thus would serve to optimize ribosomal fidelity. This chain is Dual-specificity RNA methyltransferase RlmN, found in Ruegeria pomeroyi (strain ATCC 700808 / DSM 15171 / DSS-3) (Silicibacter pomeroyi).